Here is a 245-residue protein sequence, read N- to C-terminus: 1-(5-phosphoribosyl)-5-[(5-phosphoribosylamino)methylideneamino] imidazole-4-carboxamide isomerase (245 aa).

Aspartate 8 (proton acceptor) is an active-site residue. Aspartate 131 functions as the Proton donor in the catalytic mechanism.

Belongs to the HisA/HisF family.

The protein localises to the cytoplasm. The catalysed reaction is 1-(5-phospho-beta-D-ribosyl)-5-[(5-phospho-beta-D-ribosylamino)methylideneamino]imidazole-4-carboxamide = 5-[(5-phospho-1-deoxy-D-ribulos-1-ylimino)methylamino]-1-(5-phospho-beta-D-ribosyl)imidazole-4-carboxamide. It functions in the pathway amino-acid biosynthesis; L-histidine biosynthesis; L-histidine from 5-phospho-alpha-D-ribose 1-diphosphate: step 4/9. The protein is 1-(5-phosphoribosyl)-5-[(5-phosphoribosylamino)methylideneamino] imidazole-4-carboxamide isomerase of Neisseria meningitidis serogroup C / serotype 2a (strain ATCC 700532 / DSM 15464 / FAM18).